The following is a 313-amino-acid chain: Olfactory receptor 6E1 (313 aa).

N3 carries an N-linked (GlcNAc...) asparagine glycan. A run of 7 helical transmembrane segments spans residues 25-45, 64-84, 96-116, 142-162, 192-212, 238-258, and 271-291; these read IFLG…LIIF, FAML…TNII, FLQA…LAVM, LVFC…SIVF, LVEF…LAVT, TCSS…FMYV, and KVVA…IYTL. C95 and C177 are disulfide-bonded.

It belongs to the G-protein coupled receptor 1 family.

Its subcellular location is the cell membrane. Its function is as follows. Odorant receptor. Activated by (-)-citronellal and to a lesser extent by (+)-citronellal. Not activated by carvone or limonene. In Mus musculus (Mouse), this protein is Olfactory receptor 6E1.